The primary structure comprises 438 residues: Argininosuccinate lyase (438 aa).

It belongs to the lyase 1 family. Argininosuccinate lyase subfamily.

Its subcellular location is the cytoplasm. It carries out the reaction 2-(N(omega)-L-arginino)succinate = fumarate + L-arginine. Its pathway is amino-acid biosynthesis; L-arginine biosynthesis; L-arginine from L-ornithine and carbamoyl phosphate: step 3/3. The polypeptide is Argininosuccinate lyase (Clostridioides difficile (strain 630) (Peptoclostridium difficile)).